We begin with the raw amino-acid sequence, 221 residues long: Thymidylate kinase (221 aa).

12 to 19 (GIDGAGKS) contacts ATP.

The protein belongs to the thymidylate kinase family.

The catalysed reaction is dTMP + ATP = dTDP + ADP. In terms of biological role, phosphorylation of dTMP to form dTDP in both de novo and salvage pathways of dTTP synthesis. This chain is Thymidylate kinase, found in Paracidovorax citrulli (strain AAC00-1) (Acidovorax citrulli).